The sequence spans 369 residues: Anhydro-N-acetylmuramic acid kinase (369 aa).

12 to 19 (GTSLDGVD) contacts ATP.

It belongs to the anhydro-N-acetylmuramic acid kinase family.

The enzyme catalyses 1,6-anhydro-N-acetyl-beta-muramate + ATP + H2O = N-acetyl-D-muramate 6-phosphate + ADP + H(+). It participates in amino-sugar metabolism; 1,6-anhydro-N-acetylmuramate degradation. Its pathway is cell wall biogenesis; peptidoglycan recycling. Its function is as follows. Catalyzes the specific phosphorylation of 1,6-anhydro-N-acetylmuramic acid (anhMurNAc) with the simultaneous cleavage of the 1,6-anhydro ring, generating MurNAc-6-P. Is required for the utilization of anhMurNAc either imported from the medium or derived from its own cell wall murein, and thus plays a role in cell wall recycling. The polypeptide is Anhydro-N-acetylmuramic acid kinase (Escherichia coli (strain SMS-3-5 / SECEC)).